The following is a 197-amino-acid chain: RNA-binding protein with multiple splicing (197 aa).

Met1 carries the N-acetylmethionine modification. Thr12 carries the phosphothreonine modification. Positions 24 to 101 (RTLFVSGLPL…QTLRLEFAKA (78 aa)) constitute an RRM domain. The interval 98–105 (FAKANTKM) is interaction with RNA. At Thr113 the chain carries Phosphothreonine.

Homodimer; each protein chain binds one RNA molecule via the external surface of the homodimer. Interacts with RNA binding proteins MBNL1, RBFOX2, RBM4 and RBM14; the interaction allows cooperative assembly of stable cell-specific alternative splicing regulatory complexes. Also interacts with RBM47, MATR3 and ESRP2. Interacts with SMAD2, SMAD3 and SMAD4; the interactions are direct. MRNA expressed in developing heart, with significantly higher expression in the atria relative to the ventricles.

The protein localises to the nucleus. Its subcellular location is the cytoplasm. It localises to the stress granule. The protein resides in the P-body. Its function is as follows. RNA binding protein that mediates the regulation of pre-mRNA alternative splicing (AS). Acts either as activator (FLNB, HSPG2, LIPA1, MYOCD, PTPRF and PPFIBP1) or repressor (TPM1, ACTN1, ITGA7, PIEZO1, LSM14B, MBNL1 and MBML2) of splicing events on specific pre-mRNA targets. Together with RNA binding proteins RBFOX2 and MBNL1/2, activates a splicing program associated with differentiated contractile vascular smooth muscle cells (SMC) by regulating AS of numerous pre-mRNA involved in actin cytoskeleton and focal adhesion machineries, suggesting a role in promoting a cell differentiated state. Binds to introns, exons and 3'-UTR associated with tandem CAC trinucleotide motifs separated by a variable spacer region, at a minimum as a dimer. The minimal length of RNA required for RBPMS-binding tandem CAC motifs is 15 nt, with spacing ranging from 1 to 9 nt. Can also bind to CA dinucleotide repeats. Mediates repression of TPM1 exon 3 by binding to CAC tandem repeats in the flanking intronic regions, followed by higher-order oligomerization and heterotypic interactions with other splicing regulators including MBNL1 and RBFOX2, which prevents assembly of ATP-dependent splicing complexes. The chain is RNA-binding protein with multiple splicing from Mus musculus (Mouse).